Here is a 48-residue protein sequence, read N- to C-terminus: Omega-agatoxin-Aa5a (48 aa).

Disulfide bonds link C3/C16, C10/C21, C15/C32, and C23/C30.

This sequence belongs to the neurotoxin 02 (plectoxin) family. As to expression, expressed by the venom gland.

The protein resides in the secreted. The toxin blocks voltage-gated calcium channels in rat cerebellar granule cells (IC(50)=200 nM). In Agelenopsis aperta (North American funnel-web spider), this protein is Omega-agatoxin-Aa5a.